Here is a 243-residue protein sequence, read N- to C-terminus: Pyridoxine 5'-phosphate synthase (243 aa).

Asn9 contributes to the 3-amino-2-oxopropyl phosphate binding site. A 1-deoxy-D-xylulose 5-phosphate-binding site is contributed by 11-12 (DH). Residue Arg20 coordinates 3-amino-2-oxopropyl phosphate. The Proton acceptor role is filled by His45. 1-deoxy-D-xylulose 5-phosphate is bound by residues Arg47 and His52. Glu72 serves as the catalytic Proton acceptor. Thr102 lines the 1-deoxy-D-xylulose 5-phosphate pocket. The Proton donor role is filled by His193. 3-amino-2-oxopropyl phosphate contacts are provided by residues Gly194 and 215–216 (GH).

It belongs to the PNP synthase family. In terms of assembly, homooctamer; tetramer of dimers.

Its subcellular location is the cytoplasm. It carries out the reaction 3-amino-2-oxopropyl phosphate + 1-deoxy-D-xylulose 5-phosphate = pyridoxine 5'-phosphate + phosphate + 2 H2O + H(+). The protein operates within cofactor biosynthesis; pyridoxine 5'-phosphate biosynthesis; pyridoxine 5'-phosphate from D-erythrose 4-phosphate: step 5/5. Catalyzes the complicated ring closure reaction between the two acyclic compounds 1-deoxy-D-xylulose-5-phosphate (DXP) and 3-amino-2-oxopropyl phosphate (1-amino-acetone-3-phosphate or AAP) to form pyridoxine 5'-phosphate (PNP) and inorganic phosphate. This Pectobacterium atrosepticum (strain SCRI 1043 / ATCC BAA-672) (Erwinia carotovora subsp. atroseptica) protein is Pyridoxine 5'-phosphate synthase.